A 131-amino-acid chain; its full sequence is Holo-[acyl-carrier-protein] synthase (131 aa).

Mg(2+) contacts are provided by Asp9 and Glu58.

This sequence belongs to the P-Pant transferase superfamily. AcpS family. It depends on Mg(2+) as a cofactor.

Its subcellular location is the cytoplasm. The catalysed reaction is apo-[ACP] + CoA = holo-[ACP] + adenosine 3',5'-bisphosphate + H(+). Functionally, transfers the 4'-phosphopantetheine moiety from coenzyme A to a Ser of acyl-carrier-protein. In Salmonella arizonae (strain ATCC BAA-731 / CDC346-86 / RSK2980), this protein is Holo-[acyl-carrier-protein] synthase.